A 1285-amino-acid polypeptide reads, in one-letter code: Period circadian protein homolog 1 (1285 aa).

Positions 1 to 134 are disordered; that stretch reads MSGPLEGADG…SSEQSARART (134 aa). Residues 1 to 151 are interaction with BTRC; the sequence is MSGPLEGADG…LRELKLRLPP (151 aa). Composition is skewed to low complexity over residues 48 to 57 and 64 to 115; these read NSNGSSGNES and GASQ…ASSE. A compositionally biased stretch (polar residues) spans 116-132; sequence QDNPSTSGCSSEQSARA. The residue at position 121 (Thr121) is a Phosphothreonine; by CSNK1E. 2 positions are modified to phosphoserine; by CSNK1E: Ser122 and Ser126. The short motif at 138–147 is the Nuclear export signal 1 element; it reads LMTALRELKL. PAS domains follow at residues 208–275 and 348–414; these read ITSE…PFRL and YEAP…KILQ. One can recognise a PAC domain in the interval 422–465; the sequence is HSPIRFCARNGEYVTMDTSWAGFVHPWSRKVAFVLGRHKVRTAP. Residues 489–498 carry the Nuclear export signal 2 motif; sequence LSEQIHRLLL. Disordered stretches follow at residues 503–544 and 643–694; these read SSSP…PAPV and TKRK…KEPV. Composition is skewed to low complexity over residues 523–533 and 648–658; these read SPGSSSDSNGG and ASSSSCTASSA. The tract at residues 592–811 is required for phosphorylation by CSNK1E; the sequence is ELEVVPMPNQ…GLDSSSATPS (220 aa). Phosphoserine occurs at positions 657, 659, 700, and 811. 2 disordered regions span residues 802-867 and 931-1030; these read GLDS…PPST and LSQA…DALS. Residues 820–836 carry the Nuclear localization signal motif; the sequence is VPPGRRHHCRSKAKRSR. Basic residues predominate over residues 823-840; it reads GRRHHCRSKAKRSRHHHT. The segment covering 853–867 has biased composition (pro residues); it reads SPVPPSGPWPPPPST. Residues 943-954 show a composition bias toward low complexity; sequence ASHSPSPSLTPL. The span at 967–979 shows a compositional bias: polar residues; sequence FNSRCSSPLQLNL. 2 positions are modified to phosphoserine: Ser972 and Ser973. Residues 975-982 carry the Nuclear export signal 3 motif; the sequence is LQLNLLQL. The LXXLL signature appears at 1036 to 1040; that stretch reads LELLL. Over residues 1045 to 1055 the composition is skewed to low complexity; that stretch reads RSGTGSAASGS. 2 disordered regions span residues 1045–1091 and 1202–1285; these read RSGT…SKYF and IQDP…NSTS. The segment covering 1056 to 1070 has biased composition (gly residues); the sequence is LGSGLGSGSGSGSHE. Residues 1071–1088 are compositionally biased toward low complexity; sequence GGSTSASITRSSQSSHTS. Residues 1142-1285 form a CRY binding domain region; that stretch reads SRDRASVLKQ…ALPAEENSTS (144 aa). Residues 1229–1241 are compositionally biased toward gly residues; sequence GEGGGGGGGGGEG. A compositionally biased stretch (polar residues) spans 1269 to 1285; that stretch reads GGSSSSPALPAEENSTS.

In terms of assembly, homodimer. Component of the circadian core oscillator, which includes the CRY proteins, CLOCK or NPAS2, BMAL1 or BMAL2, CSNK1D and/or CSNK1E, TIMELESS, and the PER proteins. Interacts directly with TIMELESS, PER2, PER3, CRY1 and CRY2. Interacts with BMAL1 and CLOCK. Interacts with GPRASP1. Interacts (phosphorylated) with BTRC and FBXW11; the interactions trigger proteasomal degradation. Interacts with NONO, WDR5 and SFPQ. Interacts with USP2. Interacts with HNF4A. Phosphorylated on serine residues by CSNK1D, CSNK1E and probably also by CSNK1G2. Phosphorylation by CSNK1D or CSNK1E promotes nuclear location of PER proteins as well as ubiquitination and subsequent degradation. May be dephosphorylated by PP1. Post-translationally, ubiquitinated; requires phosphorylation by CSNK1E and interaction with BTRC and FBXW11. Deubiquitinated by USP2. Expressed in the brain, mainly in the suprachiasmatic nucleus (SCN). Expression also found in the harderian gland, lung, eye, intestine, liver and skeletal muscle.

The protein resides in the nucleus. It localises to the cytoplasm. In terms of biological role, transcriptional repressor which forms a core component of the circadian clock. The circadian clock, an internal time-keeping system, regulates various physiological processes through the generation of approximately 24 hour circadian rhythms in gene expression, which are translated into rhythms in metabolism and behavior. It is derived from the Latin roots 'circa' (about) and 'diem' (day) and acts as an important regulator of a wide array of physiological functions including metabolism, sleep, body temperature, blood pressure, endocrine, immune, cardiovascular, and renal function. Consists of two major components: the central clock, residing in the suprachiasmatic nucleus (SCN) of the brain, and the peripheral clocks that are present in nearly every tissue and organ system. Both the central and peripheral clocks can be reset by environmental cues, also known as Zeitgebers (German for 'timegivers'). The predominant Zeitgeber for the central clock is light, which is sensed by retina and signals directly to the SCN. The central clock entrains the peripheral clocks through neuronal and hormonal signals, body temperature and feeding-related cues, aligning all clocks with the external light/dark cycle. Circadian rhythms allow an organism to achieve temporal homeostasis with its environment at the molecular level by regulating gene expression to create a peak of protein expression once every 24 hours to control when a particular physiological process is most active with respect to the solar day. Transcription and translation of core clock components (CLOCK, NPAS2, BMAL1, BMAL2, PER1, PER2, PER3, CRY1 and CRY2) plays a critical role in rhythm generation, whereas delays imposed by post-translational modifications (PTMs) are important for determining the period (tau) of the rhythms (tau refers to the period of a rhythm and is the length, in time, of one complete cycle). A diurnal rhythm is synchronized with the day/night cycle, while the ultradian and infradian rhythms have a period shorter and longer than 24 hours, respectively. Disruptions in the circadian rhythms contribute to the pathology of cardiovascular diseases, cancer, metabolic syndromes and aging. A transcription/translation feedback loop (TTFL) forms the core of the molecular circadian clock mechanism. Transcription factors, CLOCK or NPAS2 and BMAL1 or BMAL2, form the positive limb of the feedback loop, act in the form of a heterodimer and activate the transcription of core clock genes and clock-controlled genes (involved in key metabolic processes), harboring E-box elements (5'-CACGTG-3') within their promoters. The core clock genes: PER1/2/3 and CRY1/2 which are transcriptional repressors form the negative limb of the feedback loop and interact with the CLOCK|NPAS2-BMAL1|BMAL2 heterodimer inhibiting its activity and thereby negatively regulating their own expression. This heterodimer also activates nuclear receptors NR1D1/2 and RORA/B/G, which form a second feedback loop and which activate and repress BMAL1 transcription, respectively. Regulates circadian target genes expression at post-transcriptional levels, but may not be required for the repression at transcriptional level. Controls PER2 protein decay. Represses CRY2 preventing its repression on CLOCK/BMAL1 target genes such as FXYD5 and SCNN1A in kidney and PPARA in liver. Besides its involvement in the maintenance of the circadian clock, has an important function in the regulation of several processes. Participates in the repression of glucocorticoid receptor NR3C1/GR-induced transcriptional activity by reducing the association of NR3C1/GR to glucocorticoid response elements (GREs) by BMAL1:CLOCK. Plays a role in the modulation of the neuroinflammatory state via the regulation of inflammatory mediators release, such as CCL2 and IL6. In spinal astrocytes, negatively regulates the MAPK14/p38 and MAPK8/JNK MAPK cascades as well as the subsequent activation of NFkappaB. Coordinately regulates the expression of multiple genes that are involved in the regulation of renal sodium reabsorption. Can act as gene expression activator in a gene and tissue specific manner, in kidney enhances WNK1 and SLC12A3 expression in collaboration with CLOCK. Modulates hair follicle cycling. Represses the CLOCK-BMAL1 induced transcription of BHLHE40/DEC1. This is Period circadian protein homolog 1 (PER1) from Spalax judaei (Judean Mountains blind mole rat).